Reading from the N-terminus, the 185-residue chain is MMTLSDLPSDLAEEVLSKIPVTSLRGVRATCKKWNTLSKDRSFTRKHLAQAKAAAAREFMVVMVMDFQVYLMGINLHKDVDATINGQGKLISLDDSNQVDISYVYHCDSLVLCIPKDCARLVVWNPYWGQTLWFKPTSLRHFPHWYMYAIGYQMRRGNRDAKTSRWLLTCRPTTKTITKNTIDHL.

An F-box domain is found at 1-47 (MMTLSDLPSDLAEEVLSKIPVTSLRGVRATCKKWNTLSKDRSFTRKH).

In Arabidopsis thaliana (Mouse-ear cress), this protein is Putative F-box protein At3g17400.